The sequence spans 1745 residues: Tight junction protein 1 (1745 aa).

A PDZ 1 domain is found at 23–110 (TVTLHRAPGF…NAKITIRRKK (88 aa)). Residues 102–112 (AKITIRRKKKV) are compositionally biased toward basic residues. The tract at residues 102–189 (AKITIRRKKK…QPAKPTKVTL (88 aa)) is disordered. Positions 123 to 136 (PVSDNEDDSYDEEV) are enriched in acidic residues. A Phosphoserine modification is found at Ser-125. The residue at position 132 (Tyr-132) is a Phosphotyrosine. Over residues 149–175 (RRSEKSWARDRSASRERSLSPRSDRRS) the composition is skewed to basic and acidic residues. Ser-175, Ser-178, and Ser-179 each carry phosphoserine. At Thr-185 the chain carries Phosphothreonine. Residues 186–264 (KVTLVKSRKN…KLKMVVQRDE (79 aa)) enclose the PDZ 2 domain. Ser-212 and Ser-241 each carry phosphoserine. Thr-267 carries the phosphothreonine modification. Phosphoserine occurs at positions 275, 277, 280, 284, 290, 294, 297, 300, 323, 329, 334, 337, and 353. Residues 296 to 364 (ASDHSGRSHD…PVKHVDDHPP (69 aa)) form a disordered region. Basic and acidic residues predominate over residues 299–308 (HSGRSHDRPP). Residues 325–338 (HSTQSPQQPSNGSL) show a composition bias toward polar residues. Residue Thr-354 is modified to Phosphothreonine. The PDZ 3 domain maps to 421-502 (SMKLVKFRKG…GEEVTILAQK (82 aa)). Residues 516–584 (GDSFYIRTHF…PNKNRAEQLA (69 aa)) form the SH3 domain. One can recognise a Guanylate kinase-like domain in the interval 610 to 791 (SKRNLRKSRE…WYGALKEAIQ (182 aa)). 2 positions are modified to phosphoserine: Ser-617 and Ser-622. The occludin (OCLN)-binding region stretch occupies residues 633-876 (YERVVLREAG…GTPPESAITR (244 aa)). Thr-809 is modified (phosphothreonine). 2 positions are modified to phosphoserine: Ser-810 and Ser-821. Tyr-822 carries the phosphotyrosine modification. A phosphoserine mark is found at Ser-824, Ser-828, and Ser-837. Disordered regions lie at residues 825–944 (APGS…SASA) and 956–1042 (LEEP…YEPQ). A phosphothreonine mark is found at Thr-846, Thr-848, Thr-854, Thr-861, and Thr-868. The span at 879-892 (EPVREDSSGMHHEN) shows a compositional bias: basic and acidic residues. Low complexity predominate over residues 893-906 (QTYPPYSPQAQPQA). Ser-912 carries the phosphoserine modification. The segment covering 998–1014 (DPAKVYRKEPYSEEMMR) has biased composition (basic and acidic residues). Ser-1071 bears the Phosphoserine mark. The tract at residues 1090-1586 (QWSYYDDKQP…STQPPEFDSG (497 aa)) is disordered. A compositionally biased stretch (basic and acidic residues) spans 1106–1124 (ENQHPRDLDSRQHPEEASE). A Phosphoserine modification is found at Ser-1138. Residues Tyr-1139 and Tyr-1164 each carry the phosphotyrosine modification. Positions 1150 to 1370 (RTSTLRHEEQ…FDRRSFESKP (221 aa)) are actin-binding region (ABR). Basic and acidic residues-rich tracts occupy residues 1268-1285 (KMFENKRSASLENKKDVN) and 1335-1346 (PPEDIVRSNHYD). Phosphotyrosine is present on Tyr-1353. A Phosphoserine modification is found at Ser-1365. The span at 1388-1399 (SQSQPNFSSYSS) shows a compositional bias: low complexity. Basic and acidic residues predominate over residues 1401 to 1418 (GKPETDAVDRSFSEKRYD). Ser-1411 is modified (phosphoserine). The segment covering 1431-1445 (SQYSQPAPPLSSSSL) has biased composition (low complexity). Composition is skewed to polar residues over residues 1455-1468 (EGNSVSLDFQNSYM) and 1510-1519 (AEQTQKTITP). Residues 1535-1544 (PFERKFESPK) show a composition bias toward basic and acidic residues. Ser-1542 carries the phosphoserine modification. The segment covering 1561-1580 (SSKTPTSPKTLMKAHSSTQP) has biased composition (polar residues). Ser-1614 carries the post-translational modification Phosphoserine. Positions 1631-1745 (ATARGIFNSN…NCVSVLIDHF (115 aa)) constitute a ZU5 domain.

The protein belongs to the MAGUK family. In terms of assembly, homodimer. Forms heterodimers TJP3. Forms a heterodimer (via PDZ2 domain) with TJP2/ZO2 (via PDZ2 domain). Interacts with OCLN, CALM, claudins, CGN/cingulin, CXADR, GJD3 and UBN1. Interacts (via ZU5 domain) with CDC42BPB. Interacts (via PDZ domain) with GJA1. Interacts (via PDZ domains) with ANKRD2. Interacts with POPDC1 (via the C-terminus cytoplasmic tail). Interacts with GJA12 and KIRREL1. Interacts with HSPA4. Interacts (via ZU5 domain) with MYZAP. Interacts with DLL1. Interacts with USP53 (via the C-terminal region). Interacts with DNMBP (via C-terminal domain); required for the apical cell-cell junction localization of DNMBP. Interacts with SPEF1. Interacts (via N-terminus) with CTNNA1. Interacts with CLDN18. Interacts with CLDN16 (via TRV motif); this is a prerequisite for anchoring of CLDN16 at the tight junction. Interacts with PKP1; the interaction facilitates TJP1/ZO-1 localization to the plasma membrane. Interacts with PATJ (via PDZ1-6 domains); the interaction is required for attachment and extension of TJP1/ZO1 condensates along the apical cell interface. Post-translationally, phosphorylated at tyrosine redidues in response to epidermal growth factor (EGF). This response is dependent on an intact actin microfilament system. Dephosphorylated by PTPRJ. In terms of tissue distribution, expressed between ameloblasts, at ameloblast-ameloblast junctions and in the stratum intermedium during pre-secretory and secretory stages of tooth development (at protein level).

Its subcellular location is the cell membrane. The protein localises to the cell junction. It localises to the tight junction. It is found in the gap junction. The protein resides in the cytoplasm. Its subcellular location is the myofibril. The protein localises to the sarcomere. It localises to the i band. Its function is as follows. Tjp1, TjpP2, and Tjp3 are closely related scaffolding proteins that link tight junction (TJ) transmembrane proteins such as claudins, junctional adhesion molecules, and occludin to the actin cytoskeleton. Forms a multistranded TJP1/ZO1 condensate which elongates to form a tight junction belt, the belt is anchored at the apical cell membrane via interaction with PATJ. The tight junction acts to limit movement of substances through the paracellular space and as a boundary between the compositionally distinct apical and basolateral plasma membrane domains of epithelial and endothelial cells. Necessary for lumenogenesis, and particularly efficient epithelial polarization and barrier formation. Plays a role in the regulation of cell migration by targeting Cdc42bpb to the leading edge of migrating cells. Plays an important role in podosome formation and associated function, thus regulating cell adhesion and matrix remodeling. With Tjp2 and TJjp3, participates in the junctional retention and stability of the transcription factor Dbpa, but is not involved in its shuttling to the nucleus. May play a role in mediating cell morphology changes during ameloblast differentiation via its role in tight junctions. In Mus musculus (Mouse), this protein is Tight junction protein 1.